Here is a 1192-residue protein sequence, read N- to C-terminus: Integrator complex subunit 2 (1192 aa).

The chain crosses the membrane as a helical span at residues 420–436 (FVSLSFCMLLAFSTLVS).

This sequence belongs to the Integrator subunit 2 family. As to quaternary structure, component of the Integrator complex, composed of core subunits INTS1, INTS2, INTS3, INTS4, INTS5, INTS6, INTS7, INTS8, INTS9/RC74, INTS10, INTS11/CPSF3L, INTS12, INTS13, INTS14 and INTS15. The core complex associates with protein phosphatase 2A subunits PPP2CA and PPP2R1A, to form the Integrator-PP2A (INTAC) complex.

The protein resides in the nucleus. It is found in the nucleus membrane. Its subcellular location is the cytoplasm. Functionally, component of the integrator complex, a multiprotein complex that terminates RNA polymerase II (Pol II) transcription in the promoter-proximal region of genes. The integrator complex provides a quality checkpoint during transcription elongation by driving premature transcription termination of transcripts that are unfavorably configured for transcriptional elongation: the complex terminates transcription by (1) catalyzing dephosphorylation of the C-terminal domain (CTD) of Pol II subunit POLR2A/RPB1 and SUPT5H/SPT5, (2) degrading the exiting nascent RNA transcript via endonuclease activity and (3) promoting the release of Pol II from bound DNA. The integrator complex is also involved in terminating the synthesis of non-coding Pol II transcripts, such as enhancer RNAs (eRNAs), small nuclear RNAs (snRNAs), telomerase RNAs and long non-coding RNAs (lncRNAs). The polypeptide is Integrator complex subunit 2 (INTS2) (Gallus gallus (Chicken)).